Reading from the N-terminus, the 844-residue chain is Aminopeptidase N (844 aa).

Substrate contacts are provided by residues E120 and 253 to 257; that span reads GAMEN. Zn(2+) is bound at residue H289. E290 serves as the catalytic Proton acceptor. Positions 293 and 312 each coordinate Zn(2+).

It belongs to the peptidase M1 family. In terms of assembly, monomer. Zn(2+) is required as a cofactor.

It localises to the cytoplasm. The enzyme catalyses Release of an N-terminal amino acid, Xaa-|-Yaa- from a peptide, amide or arylamide. Xaa is preferably Ala, but may be most amino acids including Pro (slow action). When a terminal hydrophobic residue is followed by a prolyl residue, the two may be released as an intact Xaa-Pro dipeptide.. In terms of biological role, aminopeptidase N is involved in the degradation of intracellular peptides generated by protein breakdown during normal growth as well as in response to nutrient starvation. In Lactobacillus helveticus (Lactobacillus suntoryeus), this protein is Aminopeptidase N (pepN).